Reading from the N-terminus, the 70-residue chain is Large ribosomal subunit protein bL31 (70 aa).

The Zn(2+) site is built by cysteine 16, cysteine 18, cysteine 37, and cysteine 40.

The protein belongs to the bacterial ribosomal protein bL31 family. Type A subfamily. As to quaternary structure, part of the 50S ribosomal subunit. Zn(2+) is required as a cofactor.

Functionally, binds the 23S rRNA. The chain is Large ribosomal subunit protein bL31 from Cronobacter sakazakii (strain ATCC BAA-894) (Enterobacter sakazakii).